A 372-amino-acid polypeptide reads, in one-letter code: Glutamate 5-kinase (372 aa).

Residue lysine 14 participates in ATP binding. Residues serine 54, aspartate 141, and asparagine 153 each contribute to the substrate site. An ATP-binding site is contributed by 173–174; that stretch reads TD. The 79-residue stretch at 280–358 folds into the PUA domain; the sequence is RGRVIIDAGA…SEIESVLGHL (79 aa).

The protein belongs to the glutamate 5-kinase family.

The protein localises to the cytoplasm. It carries out the reaction L-glutamate + ATP = L-glutamyl 5-phosphate + ADP. It participates in amino-acid biosynthesis; L-proline biosynthesis; L-glutamate 5-semialdehyde from L-glutamate: step 1/2. In terms of biological role, catalyzes the transfer of a phosphate group to glutamate to form L-glutamate 5-phosphate. This Cupriavidus metallidurans (strain ATCC 43123 / DSM 2839 / NBRC 102507 / CH34) (Ralstonia metallidurans) protein is Glutamate 5-kinase.